We begin with the raw amino-acid sequence, 319 residues long: Lipoyl synthase (319 aa).

Residues C66, C71, C77, C92, C96, C99, and S305 each coordinate [4Fe-4S] cluster. A Radical SAM core domain is found at 78-294 (FNRGTATFMI…KKEALSIGFT (217 aa)).

Belongs to the radical SAM superfamily. Lipoyl synthase family. [4Fe-4S] cluster is required as a cofactor.

It localises to the cytoplasm. The catalysed reaction is [[Fe-S] cluster scaffold protein carrying a second [4Fe-4S](2+) cluster] + N(6)-octanoyl-L-lysyl-[protein] + 2 oxidized [2Fe-2S]-[ferredoxin] + 2 S-adenosyl-L-methionine + 4 H(+) = [[Fe-S] cluster scaffold protein] + N(6)-[(R)-dihydrolipoyl]-L-lysyl-[protein] + 4 Fe(3+) + 2 hydrogen sulfide + 2 5'-deoxyadenosine + 2 L-methionine + 2 reduced [2Fe-2S]-[ferredoxin]. The protein operates within protein modification; protein lipoylation via endogenous pathway; protein N(6)-(lipoyl)lysine from octanoyl-[acyl-carrier-protein]: step 2/2. Its function is as follows. Catalyzes the radical-mediated insertion of two sulfur atoms into the C-6 and C-8 positions of the octanoyl moiety bound to the lipoyl domains of lipoate-dependent enzymes, thereby converting the octanoylated domains into lipoylated derivatives. This chain is Lipoyl synthase, found in Buchnera aphidicola subsp. Schizaphis graminum (strain Sg).